The primary structure comprises 299 residues: Peroxisomal biogenesis factor 19 (299 aa).

Alanine 2 is modified (N-acetylalanine). The docking to the peroxisome membrane and binding to PEX3 stretch occupies residues 2–56 (AAAEGGCGAGVEADRELEELLESALDDFDKAKPSPAPSPTISAPDASGPQKRSPG). The interval 2–91 (AAAEGGCGAG…QATAEFEKAM (90 aa)) is necessary for PEX19 function on peroxisome biogenesis. The disordered stretch occupies residues 25–63 (ALDDFDKAKPSPAPSPTISAPDASGPQKRSPGDTAKDAL). 4 positions are modified to phosphoserine: serine 35, serine 39, serine 54, and serine 66. Position 236 is a phosphothreonine (threonine 236). Cysteine 296 is subject to Cysteine methyl ester. Cysteine 296 is lipidated: S-farnesyl cysteine. Residues 297–299 (LIM) constitute a propeptide, removed in mature form.

It belongs to the peroxin-19 family. In terms of assembly, interacts with a broad range of peroxisomal membrane proteins, including PEX3, PEX10, PEX11A, PEX11B, PEX12, PEX13, PEX14 and PEX16, PXMP2/PMP22, PXMP4/PMP24, SLC25A17/PMP34, ABCD1/ALDP, ABCD2/ALDRP, and ABCD3/PMP70. Also interacts with the tumor suppressor CDKN2A/p19ARF.

The protein resides in the cytoplasm. The protein localises to the peroxisome membrane. In terms of biological role, necessary for early peroxisomal biogenesis. Acts both as a cytosolic chaperone and as an import receptor for peroxisomal membrane proteins (PMPs). Binds and stabilizes newly synthesized PMPs in the cytoplasm by interacting with their hydrophobic membrane-spanning domains, and targets them to the peroxisome membrane by binding to the integral membrane protein PEX3. Excludes CDKN2A from the nucleus and prevents its interaction with MDM2, which results in active degradation of TP53. The protein is Peroxisomal biogenesis factor 19 (Pex19) of Rattus norvegicus (Rat).